Reading from the N-terminus, the 262-residue chain is Serine/arginine-rich splicing factor 10 (262 aa).

Residues 10–88 (TSLFVRNVAD…RQIEIQFAQG (79 aa)) enclose the RRM domain. A phosphoserine mark is found at S23, S106, and S108. Residues 116 to 126 (YRRSRSRSYER) show a composition bias toward basic and acidic residues. The tract at residues 116-262 (YRRSRSRSYE…SWTSPKSSGH (147 aa)) is disordered. S129, S131, and S133 each carry phosphoserine. A compositionally biased stretch (low complexity) spans 134 to 150 (FDYNYRRSYSPRNSRPT). 3 positions are modified to phosphoserine: S158, S160, and R168. Composition is skewed to basic residues over residues 165–186 (FKHR…SKSQ) and 194–207 (KSRS…KTRG). The segment covering 209 to 234 (SKTDSKTHYKSGSRYEKESRKKEPPR) has biased composition (basic and acidic residues). Low complexity predominate over residues 252 to 262 (RSWTSPKSSGH).

Belongs to the splicing factor SR family. In terms of assembly, the phosphorylated but not the dephosphorylated form interacts with TRA2B/SFRS10. The dephosphorylated form interacts with SNRNP70. Isoform 1 interacts with FUS C-terminus. Isoform 3 interacts with FUS C-terminus. Interacts with YTHDC1, leading to inhibit RNA-binding activity of SRSF10. Post-translationally, phosphorylated. Fully dephosphorylated in mitosis and partially dephosphorylated on heat shock. In terms of tissue distribution, widely expressed.

It localises to the nucleus speckle. It is found in the cytoplasm. Splicing factor that in its dephosphorylated form acts as a general repressor of pre-mRNA splicing. Seems to interfere with the U1 snRNP 5'-splice recognition of SNRNP70. Required for splicing repression in M-phase cells and after heat shock. Also acts as a splicing factor that specifically promotes exon skipping during alternative splicing. Interaction with YTHDC1, a RNA-binding protein that recognizes and binds N6-methyladenosine (m6A)-containing RNAs, prevents SRSF10 from binding to its mRNA-binding sites close to m6A-containing regions, leading to inhibit exon skipping during alternative splicing. May be involved in regulation of alternative splicing in neurons, with isoform 1 acting as a positive and isoform 3 as a negative regulator. This chain is Serine/arginine-rich splicing factor 10 (SRSF10), found in Homo sapiens (Human).